The chain runs to 147 residues: Transmembrane protein 210 (147 aa).

Positions 1–31 (MAPGPWPVSCLRGGPLGLTYLSLLLIPAAAG) are cleaved as a signal peptide. Residues 32-47 (TYCECSLGLSREALIA) are Extracellular-facing. Residues 48-68 (LLVVLAGISASCFCALVIVAI) form a helical membrane-spanning segment. Topologically, residues 69 to 147 (GVLRAKGETC…PPPPPPLPPE (79 aa)) are cytoplasmic. The disordered stretch occupies residues 128–147 (AIPMEASSEEPPPPPPLPPE). Residues 137 to 147 (EPPPPPPLPPE) are compositionally biased toward pro residues.

It is found in the membrane. It localises to the cytoplasmic vesicle. The protein localises to the secretory vesicle. The protein resides in the acrosome. In Homo sapiens (Human), this protein is Transmembrane protein 210 (TMEM210).